The primary structure comprises 206 residues: Large ribosomal subunit protein mL40 (206 aa).

The transit peptide at 1–46 (MATGVMLCAARALRPRSWIPGTCQAHVRHTHQRASLLAFWDLIPMR) directs the protein to the mitochondrion. Residues 170–189 (PFEKEGPHYTPPISNYQAPE) form a disordered region.

The protein belongs to the mitochondrion-specific ribosomal protein mL40 family. As to quaternary structure, component of the mitochondrial ribosome large subunit (39S) which comprises a 16S rRNA and about 50 distinct proteins. Ubiquitous.

The protein localises to the mitochondrion. The chain is Large ribosomal subunit protein mL40 (Mrpl40) from Mus musculus (Mouse).